The sequence spans 191 residues: Peptidyl-tRNA hydrolase (191 aa).

Tyr14 contacts tRNA. The active-site Proton acceptor is the His19. The tRNA site is built by Tyr64, Asn66, and Asn112.

The protein belongs to the PTH family. In terms of assembly, monomer.

The protein resides in the cytoplasm. The catalysed reaction is an N-acyl-L-alpha-aminoacyl-tRNA + H2O = an N-acyl-L-amino acid + a tRNA + H(+). Its function is as follows. Hydrolyzes ribosome-free peptidyl-tRNAs (with 1 or more amino acids incorporated), which drop off the ribosome during protein synthesis, or as a result of ribosome stalling. Catalyzes the release of premature peptidyl moieties from peptidyl-tRNA molecules trapped in stalled 50S ribosomal subunits, and thus maintains levels of free tRNAs and 50S ribosomes. The protein is Peptidyl-tRNA hydrolase of Syntrophotalea carbinolica (strain DSM 2380 / NBRC 103641 / GraBd1) (Pelobacter carbinolicus).